Reading from the N-terminus, the 175-residue chain is Transcription factor HES-3 (175 aa).

Residues 1 to 49 form the bHLH domain; it reads MEKKRRARINVSLEQLRSLLERHYSHQIRKRKLEKADILELSVKYMRSL. In terms of domain architecture, Orange spans 65 to 98; the sequence is YPSGFQGGLRGVSQRLRPGEGDSGLRCPLLLQRR. The disordered stretch occupies residues 126–166; the sequence is RAAGGSHSPQSPLPLPGGLLESSTDVVAPHPASNCQAESTR. Low complexity predominate over residues 129 to 148; it reads GGSHSPQSPLPLPGGLLESS. The WRPW motif motif lies at 172 to 175; that stretch reads WRPW.

In terms of assembly, transcription repression requires formation of a complex with a corepressor protein of the Groucho/TLE family.

It is found in the nucleus. In terms of biological role, transcriptional repressor of genes that require a bHLH protein for their transcription. The protein is Transcription factor HES-3 (Hes3) of Mus musculus (Mouse).